Reading from the N-terminus, the 429-residue chain is Histidine--tRNA ligase (429 aa).

The protein belongs to the class-II aminoacyl-tRNA synthetase family. Homodimer.

The protein resides in the cytoplasm. It catalyses the reaction tRNA(His) + L-histidine + ATP = L-histidyl-tRNA(His) + AMP + diphosphate + H(+). The polypeptide is Histidine--tRNA ligase (Pseudomonas putida (strain W619)).